The chain runs to 346 residues: Biotin synthase (346 aa).

The region spanning 36 to 265 (YFGRQVMLHR…KAEIRIGGGR (230 aa)) is the Radical SAM core domain. Cys-54, Cys-58, and Cys-61 together coordinate [4Fe-4S] cluster. Residues Cys-98, Cys-130, Cys-190, and Arg-260 each contribute to the [2Fe-2S] cluster site.

This sequence belongs to the radical SAM superfamily. Biotin synthase family. Homodimer. The cofactor is [4Fe-4S] cluster. [2Fe-2S] cluster is required as a cofactor.

The catalysed reaction is (4R,5S)-dethiobiotin + (sulfur carrier)-SH + 2 reduced [2Fe-2S]-[ferredoxin] + 2 S-adenosyl-L-methionine = (sulfur carrier)-H + biotin + 2 5'-deoxyadenosine + 2 L-methionine + 2 oxidized [2Fe-2S]-[ferredoxin]. It participates in cofactor biosynthesis; biotin biosynthesis; biotin from 7,8-diaminononanoate: step 2/2. Catalyzes the conversion of dethiobiotin (DTB) to biotin by the insertion of a sulfur atom into dethiobiotin via a radical-based mechanism. This is Biotin synthase from Acaryochloris marina (strain MBIC 11017).